The primary structure comprises 1464 residues: Alpha-glucan water dikinase, chloroplastic (1464 aa).

The transit peptide at 1 to 77 directs the protein to the chloroplast; it reads MSNSLGNNLL…KRAFSSSPHA (77 aa). Histidine 1069 acts as the Tele-phosphohistidine intermediate in catalysis.

This sequence belongs to the PEP-utilizing enzyme family. Homodimer. The cofactor is Mg(2+). Expressed in leaves.

It is found in the plastid. The protein localises to the chloroplast. The catalysed reaction is [(1-&gt;4)-alpha-D-glucosyl](n) + n ATP + n H2O = [(1-&gt;4)-6-phospho-alpha-D-glucosyl](n) + n AMP + n phosphate + 2n H(+). It carries out the reaction ATP + protein L-histidine = ADP + protein N-phospho-L-histidine.. Mediates the incorporation of phosphate into starch-like alpha-glucan, mostly at the C-6 position of glucose units. Acts as an overall regulator of starch mobilization. Required for starch degradation, suggesting that the phosphate content of starch regulates its degradability. More active on alpha-1,6 branched amylopectin. In Solanum tuberosum (Potato), this protein is Alpha-glucan water dikinase, chloroplastic (R1).